A 390-amino-acid chain; its full sequence is Chorismate synthase (390 aa).

Residues Arg-39 and Arg-45 each coordinate NADP(+). Residues 132–134, 253–254, Gly-298, 313–317, and Arg-339 each bind FMN; these read RSS, NA, and KPIPT.

This sequence belongs to the chorismate synthase family. As to quaternary structure, homotetramer. It depends on FMNH2 as a cofactor.

The catalysed reaction is 5-O-(1-carboxyvinyl)-3-phosphoshikimate = chorismate + phosphate. Its pathway is metabolic intermediate biosynthesis; chorismate biosynthesis; chorismate from D-erythrose 4-phosphate and phosphoenolpyruvate: step 7/7. Its function is as follows. Catalyzes the anti-1,4-elimination of the C-3 phosphate and the C-6 proR hydrogen from 5-enolpyruvylshikimate-3-phosphate (EPSP) to yield chorismate, which is the branch point compound that serves as the starting substrate for the three terminal pathways of aromatic amino acid biosynthesis. This reaction introduces a second double bond into the aromatic ring system. This chain is Chorismate synthase, found in Bacillus subtilis (strain 168).